We begin with the raw amino-acid sequence, 576 residues long: Low-affinity glucose transporter HXT4 (576 aa).

Positions 1–56 (MSEEAAYQEDTAVQNTPADALSPVESDSNSALSTPSNKAERDDMKDFDENHEESNN) are disordered. Residues 1–66 (MSEEAAYQED…YVEIPKKPAS (66 aa)) lie on the Cytoplasmic side of the membrane. The segment covering 25–37 (ESDSNSALSTPSN) has biased composition (polar residues). Basic and acidic residues predominate over residues 38–54 (KAERDDMKDFDENHEES). Residue K45 forms a Glycyl lysine isopeptide (Lys-Gly) (interchain with G-Cter in ubiquitin) linkage. Residues 67-87 (AYVTVSICCLMVAFGGFVFGW) form a helical membrane-spanning segment. Residues 88 to 122 (DTGTISGFVAQTDFIRRFGMKHHDGTYYLSKVRTG) are Extracellular-facing. A helical membrane pass occupies residues 123 to 143 (LIVSIFNIGCAIGGIILAKLG). Residues 144 to 149 (DMYGRK) are Cytoplasmic-facing. The helical transmembrane segment at 150–170 (MGLIVVVVIYIIGIIIQIASI) threads the bilayer. Topologically, residues 171–180 (NKWYQYFIGR) are extracellular. Residues 181–201 (IISGLGVGGIAVLSPMLISEV) form a helical membrane-spanning segment. Over 202 to 207 (SPKHIR) the chain is Cytoplasmic. Residues 208-228 (GTLVSCYQLMITLGIFLGYCT) form a helical membrane-spanning segment. The Extracellular segment spans residues 229–242 (NYGTKTYTNSVQWR). Residues 243-263 (VPLGLGFAWALFMIGGMTFVP) form a helical membrane-spanning segment. Over 264-346 (ESPRYLVEVG…IQSLQQLTGD (83 aa)) the chain is Cytoplasmic. A helical transmembrane segment spans residues 347–363 (NYFFYYGTTVFTAVGLE). Residues 364–369 (DSFETS) are Extracellular-facing. Residues 370–387 (IVLGIVNFASTFVGIFLV) traverse the membrane as a helical segment. Over 388–394 (ERYGRRR) the chain is Cytoplasmic. Residues 395–415 (CLLWGAASMTACMVVFASVGV) form a helical membrane-spanning segment. Over 416 to 437 (TRLWPNGKKNGSSKGAGNCMIV) the chain is Extracellular. The N-linked (GlcNAc...) asparagine glycan is linked to N425. A helical transmembrane segment spans residues 438–458 (FTCFYLFCFATTWAPIPFVVN). Topologically, residues 459-475 (SETFPLRVKSKCMAIAQ) are cytoplasmic. Residues 476-496 (ACNWIWGFLIGFFTPFISGAI) form a helical membrane-spanning segment. Position 497 (D497) is a topological domain, extracellular. A helical transmembrane segment spans residues 498–518 (FYYGYVFMGCLVFSYFYVFFF). Residues 519–576 (VPETKGLTLEEVNTLWEEGVLPWKSPSWVPPNKRGTDYNADDLMHDDQPFYKKMFGKK) lie on the Cytoplasmic side of the membrane.

This sequence belongs to the major facilitator superfamily. Sugar transporter (TC 2.A.1.1) family.

The protein resides in the cell membrane. With respect to regulation, xylose uptake is strongly inhibited by glucose. Functionally, low-affinity glucose transporter. Can also transport xylose. In Saccharomyces cerevisiae (strain ATCC 204508 / S288c) (Baker's yeast), this protein is Low-affinity glucose transporter HXT4 (HXT4).